Consider the following 288-residue polypeptide: uncharacterized protein (288 aa).

Residues 1 to 12 (MTEGRCAQHPDG) show a composition bias toward basic and acidic residues. The tract at residues 1–20 (MTEGRCAQHPDGLDVQDVCD) is disordered.

It belongs to the class IV-like SAM-binding methyltransferase superfamily. RNA methyltransferase TrmH family.

This is an uncharacterized protein from Mycobacterium tuberculosis (strain ATCC 25618 / H37Rv).